Reading from the N-terminus, the 673-residue chain is NACHT, LRR and PYD domains-containing protein 10 (673 aa).

A Pyrin domain is found at 1–92; the sequence is MALARANSPQ…VDYLNQVCLN (92 aa). The 307-residue stretch at 163 to 469 folds into the NACHT domain; it reads PIVVMQGSAG…AMSFLVKEDQ (307 aa). 169–176 lines the ATP pocket; it reads GSAGTGKT. The segment at 578-673 is disordered; sequence SDKKKSVSVT…DGEMIDKMNG (96 aa). Positions 584–597 are enriched in low complexity; it reads VSVTSSFSSGKVQS. Residues 633-648 show a composition bias toward basic and acidic residues; sequence ASREKGHMEMNDKEDG. A compositionally biased stretch (acidic residues) spans 649–658; the sequence is GVEEQEDEEG. Residues 659-673 show a composition bias toward basic and acidic residues; that stretch reads QTLKKDGEMIDKMNG.

The protein belongs to the NLRP family. Oligomerizes. Interacts with PYCARD. Also interacts with CASP1 and IL1B. Interacts with NOD1 and components of the NOD1 signaling pathway including RIPK2, NR2C2/TAK1 and IKBKG/NEMO. Expressed in skin, tongue, heart, colon and several cell lines of hematopoietic and myocytic origin but not in kidney, skeletal muscle, spleen, liver, lung, thymus, brain or small intestine (at protein level).

It localises to the cytoplasm. The protein localises to the cell membrane. Inhibits autoprocessing of CASP1, CASP1-dependent IL1B secretion, PYCARD aggregation and PYCARD-mediated apoptosis but not apoptosis induced by FAS or BID. Displays anti-inflammatory activity. Required for immunity against C.albicans infection. Involved in the innate immune response by contributing to pro-inflammatory cytokine release in response to invasive bacterial infection. Contributes to T-cell-mediated inflammatory responses in the skin. Plays a role in protection against periodontitis through its involvement in induction of IL1A via ERK activation in oral epithelial cells infected with periodontal pathogens. Exhibits both ATPase and GTPase activities. The sequence is that of NACHT, LRR and PYD domains-containing protein 10 (Nlrp10) from Mus musculus (Mouse).